A 1017-amino-acid polypeptide reads, in one-letter code: MDLIRGVLLRLLLLASSLGPGAVSLRAAIRKPGKVGPPLDIKLGALNCTAFSIQWKMPRHPGSPILGYTVFYSEVGADKSLQEQLHSVPLSRDIPTTEEVIGDLKPGTEYRVSIAAYSQAGKGRLSSPRHVTTLSQDSCLPPAAPQQPHVIVVSDSEVALSWKPGASEGSAPIQYYSVEFIRPDFDKKWTSIHERIQMDSMVIKGLDPDTNYQFAVRAMNSHGPSPRSWPSDIIRTLCPEEAGSGRYGPRYITDMGAGEDDEGFEDDLDLDISFEEVKPLPATKGGNKKFLVESKKMSISNPKTISRLIPPTSASLPVTTVAPQPIPIQRKGKNGVAIMSRLFDMPCDETLCSADSFCVNDYTWGGSRCQCTLGKGGESCSEDIVIQYPQFFGHSYVTFEPLKNSYQAFQITLEFRAEAEDGLLLYCGENEHGRGDFMSLAIIRRSLQFRFNCGTGVAIIVSETKIKLGGWHTVMLYRDGLNGLLQLNNGTPVTGQSQGQYSKITFRTPLYLGGAPSAYWLVRATGTNRGFQGCVQSLAVNGRRIDMRPWPLGKALSGADVGECSSGICDEASCIHGGTCTAIKADSYICLCPLGFKGRHCEDAFTLTIPQFRESLRSYAATPWPLEPQHYLSFMEFEITFRPDSGDGVLLYSYDTGSKDFLSINLAGGHVEFRFDCGSGTGVLRSEDPLTLGNWHELRVSRTAKNGILQVDKQKIVEGMAEGGFTQIKCNTDIFIGGVPNYDDVKKNSGVLKPFSGSIQKIILNDRTIHVKHDFTSGVNVENAAHPCVRAPCAHGGSCRPRKEGYDCDCPLGFEGLHCQKECGNYCLNTIIEAIEIPQFIGRSYLTYDNPDILKRVSGSRSNVFMRFKTTAKDGLLLWRGDSPMRPNSDFISLGLRDGALVFSYNLGSGVASIMVNGSFNDGRWHRVKAVRDGQSGKITVDDYGARTGKSPGMMRQLNINGALYVGGMKEIALHTNRQYMRGLVGCISHFTLSTDYHISLVEDAVDGKNINTCGAK.

A signal peptide spans 1 to 24; sequence MDLIRGVLLRLLLLASSLGPGAVS. 2 consecutive Fibronectin type-III domains span residues 37–136 and 144–239; these read PPLD…TLSQ and APQQ…TLCP. The N-linked (GlcNAc...) asparagine glycan is linked to asparagine 47. The region spanning 343-381 is the EGF-like 1 domain; the sequence is FDMPCDETLCSADSFCVNDYTWGGSRCQCTLGKGGESCS. Intrachain disulfides connect cysteine 347–cysteine 358, cysteine 352–cysteine 369, cysteine 371–cysteine 380, cysteine 534–cysteine 564, cysteine 569–cysteine 580, cysteine 574–cysteine 590, cysteine 592–cysteine 601, cysteine 788–cysteine 799, cysteine 793–cysteine 808, cysteine 810–cysteine 819, and cysteine 987–cysteine 1014. Residues 386–564 enclose the Laminin G-like 1 domain; that stretch reads IQYPQFFGHS…ALSGADVGEC (179 aa). EGF-like domains lie at 565–602 and 784–820; these read SSGI…RHCE and AAHP…LHCQ. The Laminin G-like 2 domain maps to 609–788; sequence IPQFRESLRS…VNVENAAHPC (180 aa). Residues 835–1014 form the Laminin G-like 3 domain; sequence IEIPQFIGRS…AVDGKNINTC (180 aa).

In terms of assembly, interacts with DAG1 alpha-dystroglycan. Interacts with GPR158 and GPR179; transsynaptic interaction is required for synaptic organization of photoreceptor cells. O-glycosylated; contains chondroitin sulfate and heparan sulfate.

The protein localises to the secreted. Its subcellular location is the extracellular space. It is found in the extracellular matrix. The protein resides in the synaptic cleft. It localises to the presynaptic active zone. Involved in both the retinal photoreceptor ribbon synapse formation and physiological functions of visual perception. Plays a key role in the synaptic organization of photoreceptors by mediating transsynaptic interaction between alpha-dystroglycan and GPR179 on the postsynaptic membrane. Necessary for proper bipolar dendritic tip apposition to the photoreceptor ribbon synapse. Promotes matrix assembly and cell adhesiveness. This Homo sapiens (Human) protein is Pikachurin (EGFLAM).